The chain runs to 480 residues: NADH-quinone oxidoreductase subunit N (480 aa).

The next 14 membrane-spanning stretches (helical) occupy residues 11 to 31 (LLPELVATGFLLVVLLGGVFA), 38 to 58 (LVAALAGLGTLASFAAAAGLL), 76 to 96 (FALYFKLIITATAFFTVIAAA), 105 to 125 (APEYMTLIIAVALGGMLLVSM), 128 to 148 (LFGVFLAVELATIPSYAMVAF), 163 to 183 (LITGVIASSFLLYGIVLIYGV), 195 to 215 (AFGEGLSPVAIVGLVLMISGL), 240 to 260 (AAFLSVAPKAAIFAALLRILL), 270 to 290 (WTALMAVIAIVTMFVGNLLAL), 298 to 318 (MLAYSSVAHSGYILAAFAALQ), 329 to 349 (VMIYSAAYAVMNLGAFLTIDL), 368 to 388 (AAAMAVFMAALVGIPPLSGFF), 407 to 427 (VAVAALVVNSVLSVPYYFGII), and 453 to 473 (VYAMALLTALFFLGVGPLAAL).

The protein belongs to the complex I subunit 2 family. As to quaternary structure, NDH-1 is composed of 14 different subunits. Subunits NuoA, H, J, K, L, M, N constitute the membrane sector of the complex.

Its subcellular location is the cell membrane. The catalysed reaction is a quinone + NADH + 5 H(+)(in) = a quinol + NAD(+) + 4 H(+)(out). Functionally, NDH-1 shuttles electrons from NADH, via FMN and iron-sulfur (Fe-S) centers, to quinones in the respiratory chain. The immediate electron acceptor for the enzyme in this species is believed to be a menaquinone. Couples the redox reaction to proton translocation (for every two electrons transferred, four hydrogen ions are translocated across the cytoplasmic membrane), and thus conserves the redox energy in a proton gradient. The polypeptide is NADH-quinone oxidoreductase subunit N (Rubrobacter xylanophilus (strain DSM 9941 / JCM 11954 / NBRC 16129 / PRD-1)).